The primary structure comprises 705 residues: Translation initiation factor IF-2 (705 aa).

Positions 40–124 (DDQIKALDKK…QPAAPKEIPS (85 aa)) are disordered. Residues 41-58 (DQIKALDKKFKKEQKNDN) are compositionally biased toward basic and acidic residues. The segment covering 59–77 (KQSTQNNHQKSNNQNQNKG) has biased composition (low complexity). Residues 94 to 108 (KGNKKNNRNNKKNNK) show a composition bias toward basic residues. In terms of domain architecture, tr-type G spans 207-376 (ERPAVVTIMG…GLVAEVQELK (170 aa)). Positions 216-223 (GHVDHGKT) are G1. 216 to 223 (GHVDHGKT) serves as a coordination point for GTP. Positions 241-245 (GITQH) are G2. The interval 262-265 (DTPG) is G3. GTP-binding positions include 262–266 (DTPGH) and 316–319 (NKID). Residues 316–319 (NKID) are G4. The G5 stretch occupies residues 352 to 354 (SAL).

The protein belongs to the TRAFAC class translation factor GTPase superfamily. Classic translation factor GTPase family. IF-2 subfamily.

It localises to the cytoplasm. In terms of biological role, one of the essential components for the initiation of protein synthesis. Protects formylmethionyl-tRNA from spontaneous hydrolysis and promotes its binding to the 30S ribosomal subunits. Also involved in the hydrolysis of GTP during the formation of the 70S ribosomal complex. The chain is Translation initiation factor IF-2 from Staphylococcus aureus (strain MSSA476).